We begin with the raw amino-acid sequence, 426 residues long: tRNA(Ile)-lysidine synthase (426 aa).

19–24 (SGGLDS) is an ATP binding site.

This sequence belongs to the tRNA(Ile)-lysidine synthase family.

It is found in the cytoplasm. It carries out the reaction cytidine(34) in tRNA(Ile2) + L-lysine + ATP = lysidine(34) in tRNA(Ile2) + AMP + diphosphate + H(+). Ligates lysine onto the cytidine present at position 34 of the AUA codon-specific tRNA(Ile) that contains the anticodon CAU, in an ATP-dependent manner. Cytidine is converted to lysidine, thus changing the amino acid specificity of the tRNA from methionine to isoleucine. The sequence is that of tRNA(Ile)-lysidine synthase from Neisseria meningitidis serogroup A / serotype 4A (strain DSM 15465 / Z2491).